A 90-amino-acid polypeptide reads, in one-letter code: Probable Fe(2+)-trafficking protein (90 aa).

Belongs to the Fe(2+)-trafficking protein family.

In terms of biological role, could be a mediator in iron transactions between iron acquisition and iron-requiring processes, such as synthesis and/or repair of Fe-S clusters in biosynthetic enzymes. This chain is Probable Fe(2+)-trafficking protein, found in Nitrosococcus oceani (strain ATCC 19707 / BCRC 17464 / JCM 30415 / NCIMB 11848 / C-107).